Reading from the N-terminus, the 807-residue chain is MAALSSGSSAEGASLFNGDMEPEPPPPVLGACYAGSGGGDPAIPEEVWNIKQMIKLTQEHIEALLDKFGGEHNPPSIYLEAYEEYTSKLDALQQREQQLLESMGNGTDFSVSSSASTDTVASSSSSSLSVAPSSLSVYQNPTDMSRNNPKSPQKPIVRVFLPNKQRTVVPARCGVTVRDSLKKALMMRGLIPECCAVYRIQDGEKKPIGWDTDISWLTGEELHVEVLENVPLTTHNFVRKTFFTLAFCDFCRKLLFQGFRCQTCGYKFHQRCSTEVPLMCVNYDQLDLLFVSKFFEHHPISQEETTLGETTPASGSYPSVPPSDSVGPPILPSPSPSKSIPIPQPFRPADEDHRNQFGQRDRSSSAPNVHINTIEPVNIDDLIRDQGVRGEGAPLNQLMRCLRKYQSRTPSPLLHSVPSEIVFDFEPGPVFRGSTAGLSATPPASLPGSLTNVKALQKSPGPQRERKSSSSSEDRNRMKTLGRRDSSDDWEIPDGQITVGQRIGSGSFGTVYKGKWHGDVAVKMLNVTAPTPQQLQAFKNEVGVLRKTRHVNILLFMGYSTKPQLAIVTQWCEGSSLYHHLHIIETKFEMIKLIDIARQTAQGMDYLHAKSIIHRDLKSNNIFLHEDLTVKIGDFGLATVKSRWSGSHQFEQLSGSILWMAPEVIRMQDKNPYSFQSDVYAFGIVLYELMTGQLPYSNINNRDQIIFMVGRGYLSPDLSKVRSNCPKAMKRLMAECLKKKRDERPLFPQILASIELLARSLPKIHRSASEPSLNRAGFQTEDFSLYACASPKTPIQAGGYGEFAAFK.

Composition is skewed to low complexity over residues 1 to 15 (MAALSSGSSAEGASL) and 110 to 128 (SVSSSASTDTVASSSSSSL). 2 disordered regions span residues 1 to 36 (MAALSSGSSAEGASLFNGDMEPEPPPPVLGACYAGS) and 104 to 128 (GNGTDFSVSSSASTDTVASSSSSSL). The region spanning 155–227 (PIVRVFLPNK…TGEELHVEVL (73 aa)) is the RBD domain. Residues 234–280 (THNFVRKTFFTLAFCDFCRKLLFQGFRCQTCGYKFHQRCSTEVPLMC) form a Phorbol-ester/DAG-type zinc finger. Positions 235, 248, 251, 261, 264, 269, 272, and 280 each coordinate Zn(2+). A compositionally biased stretch (polar residues) spans 303-313 (EETTLGETTPA). Disordered stretches follow at residues 303 to 372 (EETT…VHIN) and 434 to 494 (STAG…EIPD). Over residues 314–328 (SGSYPSVPPSDSVGP) the composition is skewed to low complexity. Basic and acidic residues-rich tracts occupy residues 348 to 363 (PADEDHRNQFGQRDRS) and 463 to 487 (QRERKSSSSSEDRNRMKTLGRRDSS). The region spanning 497 to 757 (ITVGQRIGSG…PQILASIELL (261 aa)) is the Protein kinase domain. ATP contacts are provided by residues 503-511 (IGSGSFGTV) and K523. The active-site Proton acceptor is D616. Residue S790 is modified to Phosphoserine; by MAPK1. T793 carries the phosphothreonine; by MAPK1 modification.

It belongs to the protein kinase superfamily. TKL Ser/Thr protein kinase family. RAF subfamily. Zn(2+) is required as a cofactor. In terms of processing, phosphorylated. As to expression, expressed preferentially in neural tissue.

It is found in the nucleus. The protein localises to the cytoplasm. The protein resides in the cell membrane. It catalyses the reaction L-seryl-[protein] + ATP = O-phospho-L-seryl-[protein] + ADP + H(+). It carries out the reaction L-threonyl-[protein] + ATP = O-phospho-L-threonyl-[protein] + ADP + H(+). In quiescent cells, maintained in an inactive state via an intramolecular interaction between the protein kinase and N-terminal domains. Following mitogen-mediated cell activation, binds via its RGB domain to active HRAS (GTP-bound) which releases the inhibitory intramolecular interaction between the two domains. This allows the MAP2K1-mediated dimerization of KSR1 or KSR2, and BRAF which activates BRAF. Its function is as follows. Protein kinase involved in the activation of the MAP signaling cascade. May play a role in transducing specific signals in neural cells. This is Serine/threonine-protein kinase B-raf from Coturnix japonica (Japanese quail).